An 85-amino-acid polypeptide reads, in one-letter code: UPF0335 protein Oant_1161 (85 aa).

This sequence belongs to the UPF0335 family.

This Brucella anthropi (strain ATCC 49188 / DSM 6882 / CCUG 24695 / JCM 21032 / LMG 3331 / NBRC 15819 / NCTC 12168 / Alc 37) (Ochrobactrum anthropi) protein is UPF0335 protein Oant_1161.